Consider the following 310-residue polypeptide: MAGDKGGYRQINSSLNICAFEDYLKSQTDNLPELPDVEQITPRVLRVLGQNPGKFTYQGTNTYIVGTGKHRLIVDTSGGEIEWAELLESTLSSLNISLSHVLLTHWHGDHTGGVPDLLRIYPHLEHDIYKNEPESGQQDIVDGQIFRVEGATVRALHVPGHSDDHMCFILEEEQAMFTGDNILGHGTSAVEDLGTFMASMQRMLDQRCLTGYSAHGAVIADLPGKIRTELANKRRREKQILLALGRVRQRRQKSITVEDLVTEIYGESMDESTRTLALTPFTDEVLRKLAGDFKVAFEVRAGKRRWYSVE.

The Zn(2+) site is built by histidine 105, histidine 107, aspartate 109, and histidine 110. Aspartate 109 functions as the Proton donor/acceptor in the catalytic mechanism.

The protein belongs to the metallo-beta-lactamase superfamily. Requires Zn(2+) as cofactor.

The enzyme catalyses atrochrysone carboxyl-[ACP] + H2O = atrochrysone carboxylate + holo-[ACP] + H(+). It participates in pigment biosynthesis. Its function is as follows. Atrochrysone carboxyl ACP thioesterase; part of the ergochrome gene cluster responsible for the typical purple-black color of the ergot sclerotia. The ergochrome gene cluster produces several ergot pigments including the yellow ergochrome secalonic acid and its derivatives, as well as the red anthraquinones endocrocin and clavorubin. The pathway begins with the synthesis of atrochrysone thioester by the polyketide synthase (PKS) CPUR_05437. The atrochrysone carboxyl ACP thioesterase CPUR_05436 then breaks the thioester bond and releases the atrochrysone carboxylic acid from CPUR_05437. The atrochrysone carboxylic acid is then converted to atrochrysone which is further transformed into emodin anthrone. The next step is performed by the anthrone oxygenase CPUR_05434 that catalyzes the oxidation of emodinanthrone to emodin. Emodin is further modified to yield monodictyphenone via several steps involving CPUR_05427, CPUR_05428, CPUR_05429 and CPUR_05430. The short chain dehydrogenase/reductase CPUR_05418 then catalyzes the C-5 ketoreduction to give the xanthone skeleton of the monomeric units. Ergochromes formation requires further dimerization steps of different xanthone units, probably catalyzed by the cytochrome P450 monooxygenase CPUR_05419. CPUR_05425, CPUR_05426 and CPUR_05431 are unique to Claviceps, thus it is likely that they are involved in further modification of xanthone units or in their dimerization. The yellow ergochromes and the red anthraquinone pigments endocrocin and clavorubin are products from the same PKS derived precursors and the latter are likely shunt products in the pathway of xanthone biosynthesis. It is proposed that atrochrysone carboxylic acid released from the PKS CPUR_05437 can also be converted to endocrocin anthrone which is further oxidized into endocrocin by CPUR_05435. Endocrocin could be then modified to clavorubin, possibly by CPUR_05423 and CPUR_05431. Clavorubin is the principal anthraquinone metabolite produced by the cluster with a much higher yield compared to endocrocin. In Claviceps purpurea (strain 20.1) (Ergot fungus), this protein is Atrochrysone carboxyl ACP thioesterase CPUR_05436.